We begin with the raw amino-acid sequence, 120 residues long: Dense granule protein 5 (120 aa).

Residues 1-25 (MASVKRVVVAVMIVNVLALIFVGVA) form the signal peptide. A disordered region spans residues 27 to 59 (STRDVGSGGDDSEGARGREQQQVQQHEQNEDRS). A helical transmembrane segment spans residues 76-93 (AVGLAAAVVAVVSLLRLL). Residues 100 to 109 (AIQEESKESA) are compositionally biased toward basic and acidic residues. A disordered region spans residues 100–120 (AIQEESKESATAEEEEVAEEE). A compositionally biased stretch (acidic residues) spans 110-120 (TAEEEEVAEEE).

Its subcellular location is the secreted. The protein localises to the parasitophorous vacuole lumen. The protein resides in the parasitophorous vacuole membrane. It is found in the cytoplasmic vesicle. It localises to the secretory vesicle. Functionally, plays a role in the function of the cyst and parasitophorous vacuole membranes and therefore in host-parasite interactions. The sequence is that of Dense granule protein 5 (GRA5) from Toxoplasma gondii.